The sequence spans 206 residues: Geminin (206 aa).

The span at 1 to 18 (MNLSMKQKQEGAQENVKN) shows a compositional bias: polar residues. The interval 1 to 42 (MNLSMKQKQEGAQENVKNSPVPRRTLKMIQPSADGSLVGREN) is disordered. Lysine 27 is modified (N6-acetyllysine). 3 positions are modified to phosphoserine: serine 36, serine 63, and serine 64. The interval 79-158 (TQEAFDLISK…AEVIERLSNE (80 aa)) is necessary and sufficient for interaction with IDAS and CDT1. Positions 91 to 141 (PSSQYWKEVAEQRRKALYEALKENEKLHKEIEQKDSEIARLRKENKDLAEV) form a coiled coil. The disordered stretch occupies residues 157–206 (NEPLDNFESPDSQEFDSEEEAVEYSELEDSGAGTCAEETVSSSTDARPCT). Over residues 167–185 (DSQEFDSEEEAVEYSELED) the composition is skewed to acidic residues. The segment at 167–187 (DSQEFDSEEEAVEYSELEDSG) is homeodomain binding. Phosphoserine; by CK2 is present on serine 181. Residues 195–206 (TVSSSTDARPCT) show a composition bias toward polar residues.

The protein belongs to the geminin family. As to quaternary structure, homotetramer. Interacts with CDT1; this inhibits binding of the MCM complex to origins of replication. The complex with CDT1 exists in two forms, a 'permissive' heterotrimer and an 'inhibitory' heterohexamer. Interacts (via coiled-coil domain) with IDAS (via coiled-coil domain); this targets GMNN to the nucleus. The heterodimer formed by GMNN and MCIDAS has much lower affinity for CDT1 than the GMNN homodimer. Interacts with a subset of Hox proteins, affinity increasing from anterior to posterior types, the strongest interaction being with HOXB1, HOXC9 and HOXD10. Interacts with LRWD1 from G1/S to mitosis. Post-translationally, phosphorylated during mitosis. Phosphorylation at Ser-181 by CK2 results in enhanced binding to Hox proteins and more potent inhibitory effect on Hox transcriptional activity.

Its subcellular location is the cytoplasm. The protein localises to the nucleus. Inhibits DNA replication by preventing the incorporation of MCM complex into pre-replication complex (pre-RC). It is degraded during the mitotic phase of the cell cycle. Its destruction at the metaphase-anaphase transition permits replication in the succeeding cell cycle. Inhibits histone acetyltransferase activity of KAT7/HBO1 in a CDT1-dependent manner, inhibiting histone H4 acetylation and DNA replication licensing. Inhibits the transcriptional activity of a subset of Hox proteins, enrolling them in cell proliferative control. The polypeptide is Geminin (Gmnn) (Mus musculus (Mouse)).